The sequence spans 259 residues: uncharacterized protein (259 aa).

Residues 82–128 (NSGMAETIEEKREDFQKEEKEDFTEEQNIEDLLAAVADAEGRYQTNQ) are a coiled coil. The segment at 192 to 259 (LIQTQNQHPR…SSSRNSSTTS (68 aa)) is disordered. Basic residues predominate over residues 228-240 (KKVHARSRKRRKT). Low complexity predominate over residues 241–259 (SSSSSSSSSSSSRNSSTTS).

This is an uncharacterized protein from Homo sapiens (Human).